The sequence spans 129 residues: Small ribosomal subunit protein uS11 (129 aa).

Belongs to the universal ribosomal protein uS11 family. Part of the 30S ribosomal subunit. Interacts with proteins S7 and S18. Binds to IF-3.

In terms of biological role, located on the platform of the 30S subunit, it bridges several disparate RNA helices of the 16S rRNA. Forms part of the Shine-Dalgarno cleft in the 70S ribosome. The polypeptide is Small ribosomal subunit protein uS11 (Nitrosospira multiformis (strain ATCC 25196 / NCIMB 11849 / C 71)).